The following is a 335-amino-acid chain: NAC domain-containing protein 87 (335 aa).

The region spanning 21-172 is the NAC domain; the sequence is LPPGFRFHPT…EWVVCRVFHK (152 aa). Residues 119–178 mediate DNA binding; it reads VGMKKTLVFYRGRAPKGEKTNWVMHEYRLEGKYSYYNLPKSARDEWVVCRVFHKNNPSTT.

It localises to the nucleus. Functionally, binds to the promoter regions of genes involved in chlorophyll catabolic processes, such as NYC1, SGR1, SGR2 and PAO. The polypeptide is NAC domain-containing protein 87 (Arabidopsis thaliana (Mouse-ear cress)).